A 369-amino-acid chain; its full sequence is Anhydro-N-acetylmuramic acid kinase (369 aa).

12-19 (GTSLDGVD) lines the ATP pocket.

The protein belongs to the anhydro-N-acetylmuramic acid kinase family.

It carries out the reaction 1,6-anhydro-N-acetyl-beta-muramate + ATP + H2O = N-acetyl-D-muramate 6-phosphate + ADP + H(+). It functions in the pathway amino-sugar metabolism; 1,6-anhydro-N-acetylmuramate degradation. Its pathway is cell wall biogenesis; peptidoglycan recycling. In terms of biological role, catalyzes the specific phosphorylation of 1,6-anhydro-N-acetylmuramic acid (anhMurNAc) with the simultaneous cleavage of the 1,6-anhydro ring, generating MurNAc-6-P. Is required for the utilization of anhMurNAc either imported from the medium or derived from its own cell wall murein, and thus plays a role in cell wall recycling. This Actinobacillus pleuropneumoniae serotype 3 (strain JL03) protein is Anhydro-N-acetylmuramic acid kinase.